The primary structure comprises 168 residues: Peptide deformylase 2 (168 aa).

Residues C91 and H133 each contribute to the Fe cation site. E134 is an active-site residue. H137 serves as a coordination point for Fe cation.

The protein belongs to the polypeptide deformylase family. It depends on Fe(2+) as a cofactor.

It carries out the reaction N-terminal N-formyl-L-methionyl-[peptide] + H2O = N-terminal L-methionyl-[peptide] + formate. Its function is as follows. Removes the formyl group from the N-terminal Met of newly synthesized proteins. Requires at least a dipeptide for an efficient rate of reaction. N-terminal L-methionine is a prerequisite for activity but the enzyme has broad specificity at other positions. In Vibrio parahaemolyticus serotype O3:K6 (strain RIMD 2210633), this protein is Peptide deformylase 2.